A 1028-amino-acid polypeptide reads, in one-letter code: Beta-galactosidase (1028 aa).

Substrate-binding residues include Asn104 and Asp203. Position 203 (Asp203) interacts with Na(+). Mg(2+)-binding residues include Glu418, His420, and Glu463. Substrate-binding positions include Glu463 and 539–542; that span reads EYAH. Glu463 acts as the Proton donor in catalysis. Glu539 functions as the Nucleophile in the catalytic mechanism. Residue Asn599 participates in Mg(2+) binding. Residues Phe603 and Asn606 each coordinate Na(+). 2 residues coordinate substrate: Asn606 and Trp1004.

The protein belongs to the glycosyl hydrolase 2 family. Homotetramer. It depends on Mg(2+) as a cofactor. The cofactor is Na(+).

It carries out the reaction Hydrolysis of terminal non-reducing beta-D-galactose residues in beta-D-galactosides.. The protein is Beta-galactosidase of Enterobacter sp. (strain 638).